A 161-amino-acid chain; its full sequence is Cyclin-dependent protein kinase inhibitor SMR12 (161 aa).

Residues 84 to 93 show a composition bias toward acidic residues; it reads EEEEVVEEEN. The segment at 84–106 is disordered; sequence EEEEVVEEENDGFKTPTRPENRI.

Probable cyclin-dependent protein kinase (CDK) inhibitor that functions as a repressor of mitosis in the endoreduplication cell cycle. The chain is Cyclin-dependent protein kinase inhibitor SMR12 from Arabidopsis thaliana (Mouse-ear cress).